Reading from the N-terminus, the 223-residue chain is Urease accessory protein UreF (223 aa).

Belongs to the UreF family. UreD, UreF and UreG form a complex that acts as a GTP-hydrolysis-dependent molecular chaperone, activating the urease apoprotein by helping to assemble the nickel containing metallocenter of UreC. The UreE protein probably delivers the nickel.

It is found in the cytoplasm. Functionally, required for maturation of urease via the functional incorporation of the urease nickel metallocenter. The polypeptide is Urease accessory protein UreF (Agrobacterium fabrum (strain C58 / ATCC 33970) (Agrobacterium tumefaciens (strain C58))).